Here is a 408-residue protein sequence, read N- to C-terminus: Multidrug resistance protein MdtG (408 aa).

The next 11 helical transmembrane spans lie at 16 to 36, 58 to 78, 92 to 112, 115 to 135, 146 to 166, 173 to 193, 224 to 244, 256 to 276, 290 to 310, 319 to 339, and 378 to 398; these read LIVAWLGCFLTGAAFSLVMPF, IVFSITFLFSSIASPFWGGLA, LGMGIVMVLMGLAQNIWQFLI, ALLGLLGGFVPNANALIATQV, TLSTGGVSGALLGPMAGGLLA, PVFFITASVLILCFFVTLFCI, LFVTTLIIQVATGSIAPILTL, VAFISGMIASVPGVAALLSAP, ILITALIFSVLLLIPMSYVQT, FLLGAADGALLPAVQTLLVYN, and AVFLVTAGVVLFNAVYSWNSL.

It belongs to the major facilitator superfamily. DHA1 family. MdtG (TC 2.A.1.2.20) subfamily.

It is found in the cell inner membrane. In terms of biological role, confers resistance to fosfomycin and deoxycholate. The polypeptide is Multidrug resistance protein MdtG (Escherichia coli (strain 55989 / EAEC)).